Consider the following 502-residue polypeptide: Probable cytosol aminopeptidase 2 (502 aa).

Mn(2+)-binding residues include lysine 269 and aspartate 274. Lysine 281 is a catalytic residue. Mn(2+) is bound by residues aspartate 292, aspartate 351, and glutamate 353. The active site involves arginine 355.

Belongs to the peptidase M17 family. Mn(2+) is required as a cofactor.

The protein resides in the cytoplasm. It carries out the reaction Release of an N-terminal amino acid, Xaa-|-Yaa-, in which Xaa is preferably Leu, but may be other amino acids including Pro although not Arg or Lys, and Yaa may be Pro. Amino acid amides and methyl esters are also readily hydrolyzed, but rates on arylamides are exceedingly low.. The enzyme catalyses Release of an N-terminal amino acid, preferentially leucine, but not glutamic or aspartic acids.. In terms of biological role, presumably involved in the processing and regular turnover of intracellular proteins. Catalyzes the removal of unsubstituted N-terminal amino acids from various peptides. The sequence is that of Probable cytosol aminopeptidase 2 (pepA2) from Shewanella oneidensis (strain ATCC 700550 / JCM 31522 / CIP 106686 / LMG 19005 / NCIMB 14063 / MR-1).